The sequence spans 208 residues: NAD(P)H-quinone oxidoreductase subunit I (208 aa).

4Fe-4S ferredoxin-type domains are found at residues 55–84 (GRIH…VDWV) and 95–124 (RNYS…MTEE). [4Fe-4S] cluster contacts are provided by C64, C67, C70, C74, C104, C107, C110, and C114.

This sequence belongs to the complex I 23 kDa subunit family. As to quaternary structure, NDH-1 is composed of at least 11 different subunits. Requires [4Fe-4S] cluster as cofactor.

It is found in the cellular thylakoid membrane. The catalysed reaction is a plastoquinone + NADH + (n+1) H(+)(in) = a plastoquinol + NAD(+) + n H(+)(out). It carries out the reaction a plastoquinone + NADPH + (n+1) H(+)(in) = a plastoquinol + NADP(+) + n H(+)(out). Functionally, NDH-1 shuttles electrons from an unknown electron donor, via FMN and iron-sulfur (Fe-S) centers, to quinones in the respiratory and/or the photosynthetic chain. The immediate electron acceptor for the enzyme in this species is believed to be plastoquinone. Couples the redox reaction to proton translocation, and thus conserves the redox energy in a proton gradient. This Prochlorococcus marinus (strain MIT 9312) protein is NAD(P)H-quinone oxidoreductase subunit I.